Reading from the N-terminus, the 601-residue chain is Elongation factor 4 (601 aa).

A tr-type G domain is found at 5-187; that stretch reads SNIRNFAIIA…AIVTKLPSPN (183 aa). GTP is bound by residues 17 to 22 and 134 to 137; these read DHGKST and NKID.

The protein belongs to the TRAFAC class translation factor GTPase superfamily. Classic translation factor GTPase family. LepA subfamily.

The protein resides in the cell inner membrane. The enzyme catalyses GTP + H2O = GDP + phosphate + H(+). Functionally, required for accurate and efficient protein synthesis under certain stress conditions. May act as a fidelity factor of the translation reaction, by catalyzing a one-codon backward translocation of tRNAs on improperly translocated ribosomes. Back-translocation proceeds from a post-translocation (POST) complex to a pre-translocation (PRE) complex, thus giving elongation factor G a second chance to translocate the tRNAs correctly. Binds to ribosomes in a GTP-dependent manner. The polypeptide is Elongation factor 4 (Orientia tsutsugamushi (strain Ikeda) (Rickettsia tsutsugamushi)).